A 103-amino-acid chain; its full sequence is Large ribosomal subunit protein bL21 (103 aa).

The protein belongs to the bacterial ribosomal protein bL21 family. In terms of assembly, part of the 50S ribosomal subunit. Contacts protein L20.

Functionally, this protein binds to 23S rRNA in the presence of protein L20. In Dechloromonas aromatica (strain RCB), this protein is Large ribosomal subunit protein bL21.